The following is a 226-amino-acid chain: MSAFIIGSTGLVGAQLLKVAAESNKFETVHTVSRRPVDGRDKVQGVVETDTAKWPEVIRENSKGVRTFFSAFGTTRADAGGVENFKKIDYGINYECAKAAKEAGIETFVLVSSLGANESSMLFYLKSKGKLENDIIALEFPRTIIIRPGALLGKRQKSQGIANEIFQKWGNMVKGTPFKFTAYPITGEEVAKVAVHLASEPLTQGDGPVVKAVGTSELDHLVKSLE.

The protein belongs to the FMP52 family.

It localises to the mitochondrion outer membrane. The chain is Protein FMP52, mitochondrial (FMP52) from Debaryomyces hansenii (strain ATCC 36239 / CBS 767 / BCRC 21394 / JCM 1990 / NBRC 0083 / IGC 2968) (Yeast).